The primary structure comprises 93 residues: Putative transmembrane protein ORF25 (93 aa).

The next 3 helical transmembrane spans lie at 1 to 21, 22 to 42, and 60 to 80; these read MAGI…NVNA, FLVL…YASI, and LWIF…VMSL.

Its subcellular location is the host membrane. The chain is Putative transmembrane protein ORF25 from His1 virus (isolate Australia/Victoria) (His1V).